The primary structure comprises 124 residues: MVRLFRNPIKCIFYRRSRKIQEKKLRKSLKKLNFYHPPEDCCQIYRLLENVPGGTYFITENMTNDLIMVVKDSVDKKIKSIKLYLHGSYIKIHQHYYINIYMYLMRYTQIYKYPLICFNKYYNI.

The protein belongs to the asfivirus MGF 100 family.

Plays a role in virus cell tropism, and may be required for efficient virus replication in macrophages. The sequence is that of Protein MGF 100-1R from Ornithodoros (relapsing fever ticks).